A 29-amino-acid polypeptide reads, in one-letter code: Trypsin inhibitor 3 (29 aa).

3 disulfide bridges follow: Cys3/Cys20, Cys10/Cys22, and Cys16/Cys28.

This sequence belongs to the protease inhibitor I7 (squash-type serine protease inhibitor) family.

The protein resides in the secreted. Strongly inhibits trypsin, weakly inhibits chymotrypsin. This is Trypsin inhibitor 3 from Cyclanthera pedata (Achocha).